Consider the following 418-residue polypeptide: AP-3 complex subunit mu-1 (418 aa).

An MHD domain is found at 176–417; sequence NNEAYFDVVE…ITKAGKFQVR (242 aa).

This sequence belongs to the adaptor complexes medium subunit family. Adaptor protein complex 3 (AP-3) is a heterotetramer composed of two large adaptins (delta-type subunit AP3D1 and beta-type subunit AP3B1 or AP3B2), a medium adaptin (mu-type subunit AP3M1 or AP3M2) and a small adaptin (sigma-type subunit APS1 or AP3S2). Interacts with AGAP1. AP-3 associates with the BLOC-1 complex.

The protein resides in the golgi apparatus. Its subcellular location is the cytoplasmic vesicle membrane. Functionally, part of the AP-3 complex, an adaptor-related complex which is not clathrin-associated. The complex is associated with the Golgi region as well as more peripheral structures. It facilitates the budding of vesicles from the Golgi membrane and may be directly involved in trafficking to lysosomes. In concert with the BLOC-1 complex, AP-3 is required to target cargos into vesicles assembled at cell bodies for delivery into neurites and nerve terminals. The polypeptide is AP-3 complex subunit mu-1 (Ap3m1) (Rattus norvegicus (Rat)).